A 434-amino-acid polypeptide reads, in one-letter code: Probable phosphoglucosamine mutase (434 aa).

Residue serine 91 is the Phosphoserine intermediate of the active site. Residues serine 91, aspartate 229, aspartate 231, and aspartate 233 each coordinate Mg(2+). Residue serine 91 is modified to Phosphoserine.

It belongs to the phosphohexose mutase family. Mg(2+) serves as cofactor. Post-translationally, activated by phosphorylation.

It catalyses the reaction alpha-D-glucosamine 1-phosphate = D-glucosamine 6-phosphate. Functionally, catalyzes the conversion of glucosamine-6-phosphate to glucosamine-1-phosphate. This chain is Probable phosphoglucosamine mutase, found in Methanosarcina barkeri (strain Fusaro / DSM 804).